Here is a 98-residue protein sequence, read N- to C-terminus: NADH-ubiquinone oxidoreductase chain 4L (98 aa).

A run of 3 helical transmembrane segments spans residues 2 to 22, 30 to 50, and 61 to 81; these read PFIY…LLLF, LLCL…TTLG, and IILM…LVTI.

This sequence belongs to the complex I subunit 4L family. Core subunit of respiratory chain NADH dehydrogenase (Complex I) which is composed of 45 different subunits.

It localises to the mitochondrion inner membrane. The catalysed reaction is a ubiquinone + NADH + 5 H(+)(in) = a ubiquinol + NAD(+) + 4 H(+)(out). Its function is as follows. Core subunit of the mitochondrial membrane respiratory chain NADH dehydrogenase (Complex I) which catalyzes electron transfer from NADH through the respiratory chain, using ubiquinone as an electron acceptor. Part of the enzyme membrane arm which is embedded in the lipid bilayer and involved in proton translocation. This chain is NADH-ubiquinone oxidoreductase chain 4L (MT-ND4L), found in Bradypus tridactylus (Pale-throated three-toed sloth).